Here is a 93-residue protein sequence, read N- to C-terminus: Large ribosomal subunit protein uL23 (93 aa).

The protein belongs to the universal ribosomal protein uL23 family. As to quaternary structure, part of the 50S ribosomal subunit. Contacts protein L29, and trigger factor when it is bound to the ribosome.

One of the early assembly proteins it binds 23S rRNA. One of the proteins that surrounds the polypeptide exit tunnel on the outside of the ribosome. Forms the main docking site for trigger factor binding to the ribosome. This chain is Large ribosomal subunit protein uL23, found in Natranaerobius thermophilus (strain ATCC BAA-1301 / DSM 18059 / JW/NM-WN-LF).